Here is a 410-residue protein sequence, read N- to C-terminus: F-box/WD-40 repeat-containing protein 1 (410 aa).

The region spanning 32–79 is the F-box domain; that stretch reads SKECSLLPFELFEEILCRVPTKSLLRLKLTCKRWLALFNDKRFIYKHL. WD repeat units follow at residues 109–150 and 269–309; these read PNKF…VRWI and DVHN…NGVS.

The protein is F-box/WD-40 repeat-containing protein 1 (FBW1) of Arabidopsis thaliana (Mouse-ear cress).